Consider the following 102-residue polypeptide: EGGIWTQLALALVKNLATLWQSGDFQFLGHECHYRVNPTVKRLKWKYKGKFWCPSWTSITGRATKSSRSGAVEHSVRDFVSQAKSSGLITEKEAQTFISQYE.

Cys-32 and Cys-53 are joined by a disulfide.

Binds tightly to LPS and thus specifically inhibits the LPS-mediated activation of the hemolymph coagulation. It has a strong antibacterial effect especially on the growth of Gram-negative bacteria. In Tachypleus tridentatus (Japanese horseshoe crab), this protein is Anti-lipopolysaccharide factor.